A 235-amino-acid polypeptide reads, in one-letter code: RAD9, HUS1, RAD1-interacting nuclear orphan protein 1 (235 aa).

S50 is subject to Phosphoserine. The short motif at 54–60 is the RAD1-binding motif element; it reads SWVLPQF. A disordered region spans residues 66 to 106; it reads SRFPTHRKHHRDQARHPTRRSTCKFPRLTFESPESSSSETL. Over residues 69-87 the composition is skewed to basic residues; the sequence is PTHRKHHRDQARHPTRRST. The span at 96-106 shows a compositional bias: low complexity; that stretch reads ESPESSSSETL. The short motif at 123–130 is the D-box element; it reads RRPLVPLF. The segment at 156 to 198 is disordered; the sequence is QTPGSSVREDPISPDQKENSLPSCILGPRTPRTPEPGPVLVKD. Basic and acidic residues predominate over residues 162–173; the sequence is VREDPISPDQKE. The short motif at 171–175 is the KEN box element; sequence QKENS.

In terms of assembly, interacts (when phosphorylated by PLK1) with POLQ; promoting POLQ recruitment to DNA damage sites. Interacts with RAD1; interaction is direct and promotes association with the 9-1-1 (RAD9-RAD1-HUS1) complex. Interacts with RAD18. Interacts with TOPBP1. Interacts with UBE2N. Post-translationally, phosphorylated at Ser-50 by PLK1, promoting interaction with polymerase theta (POLQ). In terms of processing, ubiquitinated and degraded by the APC/C complex upon mitotic exit.

The protein resides in the nucleus. It localises to the chromosome. Functionally, involved in microhomology-mediated end-joining (MMEJ) DNA repair by promoting recruitment of polymerase theta (POLQ) to DNA damage sites during mitosis. MMEJ is an alternative non-homologous end-joining (NHEJ) machinery that takes place during mitosis to repair double-strand breaks in DNA that originate in S-phase. Accumulates in M-phase; following phosphorylation by PLK1, interacts with POLQ, enabling its recruitment to double-strand breaks for subsequent repair. Also involved in the DNA damage response (DDR) signaling in response to genotoxic stresses such as ionizing radiation (IR) during the S phase. Recruited to sites of DNA damage through interaction with the 9-1-1 cell-cycle checkpoint response complex and TOPBP1 in a ATR-dependent manner. Required for the progression of the G1 to S phase transition. Plays a role in the stimulation of CHEK1 phosphorylation. This chain is RAD9, HUS1, RAD1-interacting nuclear orphan protein 1 (Rhno1), found in Rattus norvegicus (Rat).